The following is a 132-amino-acid chain: Small ribosomal subunit protein uS8 (132 aa).

Belongs to the universal ribosomal protein uS8 family. As to quaternary structure, part of the 30S ribosomal subunit. Contacts proteins S5 and S12.

In terms of biological role, one of the primary rRNA binding proteins, it binds directly to 16S rRNA central domain where it helps coordinate assembly of the platform of the 30S subunit. The polypeptide is Small ribosomal subunit protein uS8 (Clostridium kluyveri (strain NBRC 12016)).